A 471-amino-acid chain; its full sequence is ATP synthase subunit beta (471 aa).

156–163 lines the ATP pocket; it reads GGAGVGKT.

It belongs to the ATPase alpha/beta chains family. In terms of assembly, F-type ATPases have 2 components, CF(1) - the catalytic core - and CF(0) - the membrane proton channel. CF(1) has five subunits: alpha(3), beta(3), gamma(1), delta(1), epsilon(1). CF(0) has three main subunits: a(1), b(2) and c(9-12). The alpha and beta chains form an alternating ring which encloses part of the gamma chain. CF(1) is attached to CF(0) by a central stalk formed by the gamma and epsilon chains, while a peripheral stalk is formed by the delta and b chains.

The protein resides in the cell inner membrane. It catalyses the reaction ATP + H2O + 4 H(+)(in) = ADP + phosphate + 5 H(+)(out). In terms of biological role, produces ATP from ADP in the presence of a proton gradient across the membrane. The catalytic sites are hosted primarily by the beta subunits. The polypeptide is ATP synthase subunit beta (Nitratidesulfovibrio vulgaris (strain DSM 19637 / Miyazaki F) (Desulfovibrio vulgaris)).